A 90-amino-acid chain; its full sequence is UPF0335 protein RPB_1426 (90 aa).

Belongs to the UPF0335 family.

The sequence is that of UPF0335 protein RPB_1426 from Rhodopseudomonas palustris (strain HaA2).